The primary structure comprises 368 residues: MTATAESKQRSFPKIEFTDSEAGALEFPSSRSRTFTYYTPAKKRSTMYEDVTVDVQPDPDRHLSQGWIYGFGDGPGGYPQEWTAAKSSNWHAFLDPNEEWDQTIYRNNSKVVHQVELCLSNAKRARVYDGWNTPWLTFISRNLGAWMHAENGLALHVFTSIQRSCPTNMINTAVAVNAAHKMRFAQDLALFNLDLSEATENFDGTAHKEVWQSAPEWQPTREVVERLTAVPDWCELLFGSNIVFEQLVGTLFRSELVMQIAAGNGDYITPTIVGTGEHDYDRDLAYTRNLFRLLTRDPEHGEANKELFGTWLAIWVPRCLDAARALQPIWSQPADKAITFATSFDAATDKFRSLLEDLGLDIPKELDQ.

The protein belongs to the TmoE/XamoE family. The propane 2-monooxygenase multicomponent enzyme system is composed of an electron transfer component and a monooxygenase component interacting with the effector protein PrmD. The electron transfer component is composed of a reductase (PrmB), and the monooxygenase component is formed by a large subunit (PrmA) and a small subunit (PrmC). Probably requires the presence of the chaperonin-like protein PrmG to ensure a productive folding, resulting of a soluble PrmC, which leads to the active form of PrmABCD.

It carries out the reaction propane + NADH + O2 + H(+) = propan-2-ol + NAD(+) + H2O. Component of the propane 2-monooxygenase multicomponent enzyme system which is involved in the degradation of propane via the O2-dependent hydroxylation of propane. Also able to catalyze the oxidation the water contaminant N-nitrosodimethylamine (NDMA). This is Propane 2-monooxygenase, hydroxylase component small subunit from Rhodococcus jostii (strain RHA1).